The sequence spans 142 residues: Large ribosomal subunit protein uL13 (142 aa).

This sequence belongs to the universal ribosomal protein uL13 family. In terms of assembly, part of the 50S ribosomal subunit.

In terms of biological role, this protein is one of the early assembly proteins of the 50S ribosomal subunit, although it is not seen to bind rRNA by itself. It is important during the early stages of 50S assembly. The sequence is that of Large ribosomal subunit protein uL13 from Klebsiella pneumoniae (strain 342).